Reading from the N-terminus, the 287-residue chain is Shikimate dehydrogenase (NADP(+)) (287 aa).

Shikimate contacts are provided by residues serine 20–serine 22 and threonine 67. The Proton acceptor role is filled by lysine 71. NADP(+) is bound at residue glutamate 84. Residues asparagine 93 and aspartate 108 each contribute to the shikimate site. Residues glycine 132 to alanine 136, asparagine 156 to arginine 161, and methionine 226 contribute to the NADP(+) site. Position 228 (tyrosine 228) interacts with shikimate. Residue glycine 250 coordinates NADP(+).

This sequence belongs to the shikimate dehydrogenase family. As to quaternary structure, homodimer.

It carries out the reaction shikimate + NADP(+) = 3-dehydroshikimate + NADPH + H(+). It functions in the pathway metabolic intermediate biosynthesis; chorismate biosynthesis; chorismate from D-erythrose 4-phosphate and phosphoenolpyruvate: step 4/7. Its function is as follows. Involved in the biosynthesis of the chorismate, which leads to the biosynthesis of aromatic amino acids. Catalyzes the reversible NADPH linked reduction of 3-dehydroshikimate (DHSA) to yield shikimate (SA). The sequence is that of Shikimate dehydrogenase (NADP(+)) from Bordetella parapertussis (strain 12822 / ATCC BAA-587 / NCTC 13253).